Here is a 115-residue protein sequence, read N- to C-terminus: Aspartate 1-decarboxylase (115 aa).

The active-site Schiff-base intermediate with substrate; via pyruvic acid is S24. S24 is subject to Pyruvic acid (Ser). T56 serves as a coordination point for substrate. The active-site Proton donor is Y57. 72–74 (GAA) provides a ligand contact to substrate.

Belongs to the PanD family. Heterooctamer of four alpha and four beta subunits. Requires pyruvate as cofactor. In terms of processing, is synthesized initially as an inactive proenzyme, which is activated by self-cleavage at a specific serine bond to produce a beta-subunit with a hydroxyl group at its C-terminus and an alpha-subunit with a pyruvoyl group at its N-terminus.

The protein resides in the cytoplasm. The enzyme catalyses L-aspartate + H(+) = beta-alanine + CO2. It functions in the pathway cofactor biosynthesis; (R)-pantothenate biosynthesis; beta-alanine from L-aspartate: step 1/1. Its function is as follows. Catalyzes the pyruvoyl-dependent decarboxylation of aspartate to produce beta-alanine. The chain is Aspartate 1-decarboxylase from Pseudothermotoga lettingae (strain ATCC BAA-301 / DSM 14385 / NBRC 107922 / TMO) (Thermotoga lettingae).